A 511-amino-acid chain; its full sequence is Glucose-6-phosphate 1-dehydrogenase, cytoplasmic isoform (511 aa).

NADP(+) contacts are provided by residues 36–43 (GASGDLAK), Arg71, Tyr151, and Lys178. Residues Lys178, 208-212 (HYLGK), Glu246, and Asp265 each bind D-glucose 6-phosphate. His270 serves as the catalytic Proton acceptor. Lys353 lines the NADP(+) pocket. Residues Lys356 and Arg361 each contribute to the D-glucose 6-phosphate site. 3 residues coordinate NADP(+): Lys362, Arg366, and Arg390. Position 392 (Gln392) interacts with D-glucose 6-phosphate. Residues 398-400 (YMK), 418-420 (DLS), Arg484, and Trp506 contribute to the NADP(+) site.

This sequence belongs to the glucose-6-phosphate dehydrogenase family. In terms of assembly, homotetramer. As to expression, found in tubers, stolons, roots, and flower buds.

It is found in the cytoplasm. The catalysed reaction is D-glucose 6-phosphate + NADP(+) = 6-phospho-D-glucono-1,5-lactone + NADPH + H(+). It participates in carbohydrate degradation; pentose phosphate pathway; D-ribulose 5-phosphate from D-glucose 6-phosphate (oxidative stage): step 1/3. Its activity is regulated as follows. Regulated by metabolites. In terms of biological role, catalyzes the rate-limiting step of the oxidative pentose-phosphate pathway, which represents a route for the dissimilation of carbohydrates besides glycolysis. The main function of this enzyme is to generate NADPH for reductive biosyntheses. The sequence is that of Glucose-6-phosphate 1-dehydrogenase, cytoplasmic isoform (G6PDH) from Solanum tuberosum (Potato).